The primary structure comprises 1267 residues: Clustered mitochondria protein homolog (1267 aa).

7 TPR repeats span residues 64–102 (YNLK…KPYN), 420–453 (YSFV…LNML), 716–749 (EAHE…MIKE), 795–830 (LVPL…IPAL), 904–939 (RSIC…KSRA), 1010–1043 (AEKY…YERV), and 1138–1171 (AYIK…FTKE). Positions 329–586 (PTNGPDYLRT…NTYPLDVEFA (258 aa)) constitute a Clu domain. Over residues 1203–1219 (QQDQTAASGLKQQPQKS) the composition is skewed to polar residues. Positions 1203–1267 (QQDQTAASGL…KSKSKGKNKK (65 aa)) are disordered. Over residues 1224 to 1239 (NKKETTNPDLADKSVD) the composition is skewed to basic and acidic residues. The segment covering 1254–1267 (KTTKKSKSKGKNKK) has biased composition (basic residues).

The protein belongs to the CLU family. As to quaternary structure, may associate with the eukaryotic translation initiation factor 3 (eIF-3) complex.

It is found in the cytoplasm. Functionally, mRNA-binding protein involved in proper cytoplasmic distribution of mitochondria. This is Clustered mitochondria protein homolog from Candida glabrata (strain ATCC 2001 / BCRC 20586 / JCM 3761 / NBRC 0622 / NRRL Y-65 / CBS 138) (Yeast).